A 390-amino-acid chain; its full sequence is Succinate--CoA ligase [ADP-forming] subunit beta (390 aa).

Residues 9–244 form the ATP-grasp domain; it reads KEILKRYGVN…ETQTDTSENE (236 aa). Residues Lys46, 53–55, Glu99, Leu102, and Glu107 each bind ATP; that span reads GRG. The Mg(2+) site is built by Asn199 and Asp213. Residues Asn264 and 321-323 contribute to the substrate site; that span reads GIV.

The protein belongs to the succinate/malate CoA ligase beta subunit family. Heterotetramer of two alpha and two beta subunits. Mg(2+) is required as a cofactor.

The enzyme catalyses succinate + ATP + CoA = succinyl-CoA + ADP + phosphate. The catalysed reaction is GTP + succinate + CoA = succinyl-CoA + GDP + phosphate. It functions in the pathway carbohydrate metabolism; tricarboxylic acid cycle; succinate from succinyl-CoA (ligase route): step 1/1. Succinyl-CoA synthetase functions in the citric acid cycle (TCA), coupling the hydrolysis of succinyl-CoA to the synthesis of either ATP or GTP and thus represents the only step of substrate-level phosphorylation in the TCA. The beta subunit provides nucleotide specificity of the enzyme and binds the substrate succinate, while the binding sites for coenzyme A and phosphate are found in the alpha subunit. This Campylobacter curvus (strain 525.92) protein is Succinate--CoA ligase [ADP-forming] subunit beta.